The primary structure comprises 395 residues: Glutamate N-acetyltransferase (395 aa).

Substrate contacts are provided by Thr-146, Lys-169, Thr-180, Glu-263, Asn-390, and Thr-395. Catalysis depends on Thr-180, which acts as the Nucleophile.

Belongs to the ArgJ family. Heterotetramer of two alpha and two beta chains.

The protein localises to the cytoplasm. The catalysed reaction is N(2)-acetyl-L-ornithine + L-glutamate = N-acetyl-L-glutamate + L-ornithine. It functions in the pathway amino-acid biosynthesis; L-arginine biosynthesis; L-ornithine and N-acetyl-L-glutamate from L-glutamate and N(2)-acetyl-L-ornithine (cyclic): step 1/1. In terms of biological role, catalyzes the transfer of the acetyl group from N(2)-acetylornithine to glutamate, forming N-acetylglutamate and L-ornithine. This Methanosarcina mazei (strain ATCC BAA-159 / DSM 3647 / Goe1 / Go1 / JCM 11833 / OCM 88) (Methanosarcina frisia) protein is Glutamate N-acetyltransferase.